The chain runs to 136 residues: ATP synthase epsilon chain (136 aa).

The protein belongs to the ATPase epsilon chain family. F-type ATPases have 2 components, CF(1) - the catalytic core - and CF(0) - the membrane proton channel. CF(1) has five subunits: alpha(3), beta(3), gamma(1), delta(1), epsilon(1). CF(0) has three main subunits: a, b and c.

The protein resides in the cell membrane. Functionally, produces ATP from ADP in the presence of a proton gradient across the membrane. This is ATP synthase epsilon chain from Macrococcus caseolyticus (strain JCSC5402) (Macrococcoides caseolyticum).